Reading from the N-terminus, the 275-residue chain is tRNA (guanine-N(1)-)-methyltransferase (275 aa).

S-adenosyl-L-methionine-binding positions include Gly-124 and 149 to 154 (IGDYVL).

This sequence belongs to the RNA methyltransferase TrmD family. Homodimer.

It is found in the cytoplasm. The enzyme catalyses guanosine(37) in tRNA + S-adenosyl-L-methionine = N(1)-methylguanosine(37) in tRNA + S-adenosyl-L-homocysteine + H(+). In terms of biological role, specifically methylates guanosine-37 in various tRNAs. The protein is tRNA (guanine-N(1)-)-methyltransferase of Bifidobacterium animalis subsp. lactis (strain AD011).